Here is a 749-residue protein sequence, read N- to C-terminus: Chaperone protein dnaK3 (749 aa).

Thr198 carries the phosphothreonine; by autocatalysis modification. 3 stretches are compositionally biased toward basic and acidic residues: residues Arg643–Arg653, Tyr661–Asn694, and Pro711–Ser724. The disordered stretch occupies residues Arg643 to Phe749. The span at Gly740 to Phe749 shows a compositional bias: acidic residues.

This sequence belongs to the heat shock protein 70 family.

Acts as a chaperone. In Synechococcus elongatus (strain ATCC 33912 / PCC 7942 / FACHB-805) (Anacystis nidulans R2), this protein is Chaperone protein dnaK3 (dnaK3).